The following is a 466-amino-acid chain: Cysteine--tRNA ligase (466 aa).

Cys-28 is a binding site for Zn(2+). The 'HIGH' region signature appears at 30-40 (PTVYNYIHIGN). Zn(2+) contacts are provided by Cys-208, His-233, and Glu-237. A 'KMSKS' region motif is present at residues 265–269 (KMSKS). ATP is bound at residue Lys-268.

The protein belongs to the class-I aminoacyl-tRNA synthetase family. As to quaternary structure, monomer. Zn(2+) serves as cofactor.

Its subcellular location is the cytoplasm. The catalysed reaction is tRNA(Cys) + L-cysteine + ATP = L-cysteinyl-tRNA(Cys) + AMP + diphosphate. The protein is Cysteine--tRNA ligase of Staphylococcus aureus (strain MSSA476).